Here is a 166-residue protein sequence, read N- to C-terminus: RING-H2 finger protein ATL79 (166 aa).

The signal sequence occupies residues 1 to 16 (MRLLVAEAASPLSSAA). The chain crosses the membrane as a helical span at residues 41–61 (SVLLILVISALICALSLYAAI). Residues 71–90 (TEDDHKPDPEAAASSTPTTP) form a disordered region. Residues 81 to 90 (AAASSTPTTP) show a composition bias toward low complexity. An RING-type; atypical zinc finger spans residues 107–149 (CAICLSEFEQGESIQVLEKCQHGFHVKCIHKWLSTRSSCPTCR).

This sequence belongs to the RING-type zinc finger family. ATL subfamily.

It is found in the membrane. The catalysed reaction is S-ubiquitinyl-[E2 ubiquitin-conjugating enzyme]-L-cysteine + [acceptor protein]-L-lysine = [E2 ubiquitin-conjugating enzyme]-L-cysteine + N(6)-ubiquitinyl-[acceptor protein]-L-lysine.. It participates in protein modification; protein ubiquitination. The protein is RING-H2 finger protein ATL79 (ATL79) of Arabidopsis thaliana (Mouse-ear cress).